A 117-amino-acid polypeptide reads, in one-letter code: Large ribosomal subunit protein uL18 (117 aa).

It belongs to the universal ribosomal protein uL18 family. In terms of assembly, part of the 50S ribosomal subunit; part of the 5S rRNA/L5/L18/L25 subcomplex. Contacts the 5S and 23S rRNAs.

In terms of biological role, this is one of the proteins that bind and probably mediate the attachment of the 5S RNA into the large ribosomal subunit, where it forms part of the central protuberance. The protein is Large ribosomal subunit protein uL18 of Aeromonas salmonicida (strain A449).